Here is a 621-residue protein sequence, read N- to C-terminus: Glutathione-regulated potassium-efflux system protein KefC (621 aa).

Helical transmembrane passes span His-4 to Val-24, Leu-26 to Phe-46, Ser-54 to Leu-74, Gly-90 to Met-110, Val-114 to Met-134, Val-151 to Val-171, Leu-178 to Leu-198, Val-218 to Gly-238, Gly-270 to Val-290, Leu-294 to Ile-314, Trp-327 to Gln-347, and Ala-359 to Thr-379. The RCK N-terminal domain maps to Gln-399–Thr-518. The disordered stretch occupies residues Leu-591 to Val-621. Over residues Glu-603–Val-621 the composition is skewed to basic and acidic residues.

This sequence belongs to the monovalent cation:proton antiporter 2 (CPA2) transporter (TC 2.A.37) family. KefC subfamily. In terms of assembly, homodimer. Interacts with the regulatory subunit KefF.

The protein localises to the cell inner membrane. Its function is as follows. Pore-forming subunit of a potassium efflux system that confers protection against electrophiles. Catalyzes K(+)/H(+) antiport. The protein is Glutathione-regulated potassium-efflux system protein KefC of Enterobacter sp. (strain 638).